A 580-amino-acid chain; its full sequence is Rap guanine nucleotide exchange factor 5 (580 aa).

The N-terminal Ras-GEF domain occupies 67–200; that stretch reads DRYVVVSGTP…ELKEFQKILG (134 aa). Residues 344–579 enclose the Ras-GEF domain; the sequence is NTWDLALELM…FELSHRLEPR (236 aa).

As to expression, in the embryo, expressed in young neurons of the developing telencephalon, diencephalon and hindbrain. Not expressed in progenitor cells in the ventricular zone.

It is found in the nucleus. In terms of biological role, guanine nucleotide exchange factor (GEF) for RAP1A, RAP2A and MRAS/M-Ras-GTP. Its association with MRAS inhibits Rap1 activation. This Rattus norvegicus (Rat) protein is Rap guanine nucleotide exchange factor 5 (Rapgef5).